We begin with the raw amino-acid sequence, 638 residues long: Epithelial sodium channel subunit delta (638 aa).

Positions Met-1–Ala-13 are enriched in basic and acidic residues. Positions Met-1–Glu-47 are disordered. Topologically, residues Met-1 to Thr-86 are cytoplasmic. The segment covering Pro-28 to Pro-41 has biased composition (pro residues). The helical transmembrane segment at Ser-87–Phe-107 threads the bilayer. Residues Glu-108–Ser-530 lie on the Extracellular side of the membrane. N-linked (GlcNAc...) asparagine glycosylation is found at Asn-166 and Asn-384. The chain crosses the membrane as a helical span at residues Leu-531 to Leu-551. Topologically, residues Asp-552 to Thr-638 are cytoplasmic. The interval Arg-574 to Met-613 is disordered.

It belongs to the amiloride-sensitive sodium channel (TC 1.A.6) family. SCNN1D subfamily. Can form an alternative heterotrimeric epithelial sodium channel (ENaC), composed of a delta (SCNN1D), beta (SCNN1B), and gamma (SCNN1G) subunit, where the delta (SCNN1D) subunit replaces the alpha (SCNN1A) subunit.

It is found in the apical cell membrane. It carries out the reaction Na(+)(in) = Na(+)(out). Originally identified and characterized by its inhibition by the diuretic drug amiloride. Functionally, potential alternative pore-forming subunit of the epithelial sodium channel (ENaC), capable of replacing the alpha/SCNN1A subunit, creating a more active channel with distinct properties. ENaC functions in epithelial tissues, where it facilitates the electrodiffusion of sodium ions from the extracellular fluid through the apical membrane of cells, with water following osmotically, regulating sodium balance and fluid homeostasis. This subunit could also function independently as a sodium channel or assemble into other tissue-specific heterotrimeric sodium channels. The protein is Epithelial sodium channel subunit delta of Pan troglodytes (Chimpanzee).